We begin with the raw amino-acid sequence, 725 residues long: N-alpha-acetyltransferase 35, NatC auxiliary subunit (725 aa).

The tract at residues 548–573 (ERIMEEQQKGRSSKKTKKKKKVRPLS) is disordered. A compositionally biased stretch (basic residues) spans 558-571 (RSSKKTKKKKKVRP).

The protein belongs to the MAK10 family. As to quaternary structure, component of the N-terminal acetyltransferase C (NatC) complex, which is composed of NAA35, NAA38 and NAA30. In terms of tissue distribution, expressed in primary spermatocytes, basal epidermis, interstitial fibroblasts of skeletal muscle, and intestinal crypts.

The protein resides in the cytoplasm. In terms of biological role, auxillary component of the N-terminal acetyltransferase C (NatC) complex which catalyzes acetylation of N-terminal methionine residues. N-terminal acetylation protects proteins from ubiquitination and degradation by the N-end rule pathway. Involved in regulation of apoptosis and proliferation of smooth muscle cells. The sequence is that of N-alpha-acetyltransferase 35, NatC auxiliary subunit (Naa35) from Rattus norvegicus (Rat).